We begin with the raw amino-acid sequence, 542 residues long: CTP synthase (542 aa).

Positions 1–266 (MATNYIFVTG…DEFVCNRFHL (266 aa)) are amidoligase domain. Residue S14 participates in CTP binding. S14 provides a ligand contact to UTP. ATP contacts are provided by residues 15-20 (SLGKGI) and D72. Mg(2+)-binding residues include D72 and E140. CTP is bound by residues 147–149 (DIE), 187–192 (KTKPTQ), and K223. Residues 187–192 (KTKPTQ) and K223 each bind UTP. 239-241 (KDV) is an ATP binding site. The Glutamine amidotransferase type-1 domain maps to 291–542 (TIGMVGKYVE…VKAAKENQKK (252 aa)). G352 is an L-glutamine binding site. C379 serves as the catalytic Nucleophile; for glutamine hydrolysis. Residues 380-383 (LGMQ), E403, and R470 contribute to the L-glutamine site. Catalysis depends on residues H515 and E517.

It belongs to the CTP synthase family. As to quaternary structure, homotetramer.

It carries out the reaction UTP + L-glutamine + ATP + H2O = CTP + L-glutamate + ADP + phosphate + 2 H(+). The catalysed reaction is L-glutamine + H2O = L-glutamate + NH4(+). It catalyses the reaction UTP + NH4(+) + ATP = CTP + ADP + phosphate + 2 H(+). Its pathway is pyrimidine metabolism; CTP biosynthesis via de novo pathway; CTP from UDP: step 2/2. With respect to regulation, allosterically activated by GTP, when glutamine is the substrate; GTP has no effect on the reaction when ammonia is the substrate. The allosteric effector GTP functions by stabilizing the protein conformation that binds the tetrahedral intermediate(s) formed during glutamine hydrolysis. Inhibited by the product CTP, via allosteric rather than competitive inhibition. Catalyzes the ATP-dependent amination of UTP to CTP with either L-glutamine or ammonia as the source of nitrogen. Regulates intracellular CTP levels through interactions with the four ribonucleotide triphosphates. This chain is CTP synthase, found in Actinobacillus succinogenes (strain ATCC 55618 / DSM 22257 / CCUG 43843 / 130Z).